A 297-amino-acid chain; its full sequence is 4-hydroxy-tetrahydrodipicolinate synthase (297 aa).

Thr51 contributes to the pyruvate binding site. Residue Tyr139 is the Proton donor/acceptor of the active site. The active-site Schiff-base intermediate with substrate is Lys167. Val209 lines the pyruvate pocket.

This sequence belongs to the DapA family. In terms of assembly, homotetramer; dimer of dimers.

The protein resides in the cytoplasm. It catalyses the reaction L-aspartate 4-semialdehyde + pyruvate = (2S,4S)-4-hydroxy-2,3,4,5-tetrahydrodipicolinate + H2O + H(+). Its pathway is amino-acid biosynthesis; L-lysine biosynthesis via DAP pathway; (S)-tetrahydrodipicolinate from L-aspartate: step 3/4. In terms of biological role, catalyzes the condensation of (S)-aspartate-beta-semialdehyde [(S)-ASA] and pyruvate to 4-hydroxy-tetrahydrodipicolinate (HTPA). The sequence is that of 4-hydroxy-tetrahydrodipicolinate synthase from Albidiferax ferrireducens (strain ATCC BAA-621 / DSM 15236 / T118) (Rhodoferax ferrireducens).